The primary structure comprises 401 residues: S-adenosylmethionine synthase (401 aa).

135–140 (GHGSGD) contributes to the ATP binding site.

It belongs to the AdoMet synthase 2 family. Mg(2+) is required as a cofactor.

It catalyses the reaction L-methionine + ATP + H2O = S-adenosyl-L-methionine + phosphate + diphosphate. The protein operates within amino-acid biosynthesis; S-adenosyl-L-methionine biosynthesis; S-adenosyl-L-methionine from L-methionine: step 1/1. Catalyzes the formation of S-adenosylmethionine from methionine and ATP. This is S-adenosylmethionine synthase (mat) from Methanothermobacter marburgensis (strain ATCC BAA-927 / DSM 2133 / JCM 14651 / NBRC 100331 / OCM 82 / Marburg) (Methanobacterium thermoautotrophicum).